Here is a 247-residue protein sequence, read N- to C-terminus: ATP synthase subunit a, chloroplastic (247 aa).

A run of 5 helical transmembrane segments spans residues 38–58 (QVLI…TIAV), 95–115 (VPFI…GALL), 134–154 (INTT…AGFT), 199–219 (LVVV…VMFL), and 220–240 (GLFT…AYIG).

This sequence belongs to the ATPase A chain family. F-type ATPases have 2 components, CF(1) - the catalytic core - and CF(0) - the membrane proton channel. CF(1) has five subunits: alpha(3), beta(3), gamma(1), delta(1), epsilon(1). CF(0) has four main subunits: a, b, b' and c.

It is found in the plastid. It localises to the chloroplast thylakoid membrane. In terms of biological role, key component of the proton channel; it plays a direct role in the translocation of protons across the membrane. This is ATP synthase subunit a, chloroplastic from Liriodendron tulipifera (Tuliptree).